Consider the following 100-residue polypeptide: Aspartyl/glutamyl-tRNA(Asn/Gln) amidotransferase subunit C (100 aa).

Belongs to the GatC family. As to quaternary structure, heterotrimer of A, B and C subunits.

The catalysed reaction is L-glutamyl-tRNA(Gln) + L-glutamine + ATP + H2O = L-glutaminyl-tRNA(Gln) + L-glutamate + ADP + phosphate + H(+). The enzyme catalyses L-aspartyl-tRNA(Asn) + L-glutamine + ATP + H2O = L-asparaginyl-tRNA(Asn) + L-glutamate + ADP + phosphate + 2 H(+). Its function is as follows. Allows the formation of correctly charged Asn-tRNA(Asn) or Gln-tRNA(Gln) through the transamidation of misacylated Asp-tRNA(Asn) or Glu-tRNA(Gln) in organisms which lack either or both of asparaginyl-tRNA or glutaminyl-tRNA synthetases. The reaction takes place in the presence of glutamine and ATP through an activated phospho-Asp-tRNA(Asn) or phospho-Glu-tRNA(Gln). In Streptococcus equi subsp. equi (strain 4047), this protein is Aspartyl/glutamyl-tRNA(Asn/Gln) amidotransferase subunit C.